A 496-amino-acid chain; its full sequence is Probable malate:quinone oxidoreductase (496 aa).

It belongs to the MQO family. FAD serves as cofactor.

The catalysed reaction is (S)-malate + a quinone = a quinol + oxaloacetate. Its pathway is carbohydrate metabolism; tricarboxylic acid cycle; oxaloacetate from (S)-malate (quinone route): step 1/1. The polypeptide is Probable malate:quinone oxidoreductase (Flavobacterium psychrophilum (strain ATCC 49511 / DSM 21280 / CIP 103535 / JIP02/86)).